We begin with the raw amino-acid sequence, 225 residues long: NAD(P)H-quinone oxidoreductase subunit K, chloroplastic (225 aa).

[4Fe-4S] cluster-binding residues include cysteine 43, cysteine 44, cysteine 108, and cysteine 139.

The protein belongs to the complex I 20 kDa subunit family. As to quaternary structure, NDH is composed of at least 16 different subunits, 5 of which are encoded in the nucleus. [4Fe-4S] cluster is required as a cofactor.

It localises to the plastid. It is found in the chloroplast thylakoid membrane. It catalyses the reaction a plastoquinone + NADH + (n+1) H(+)(in) = a plastoquinol + NAD(+) + n H(+)(out). It carries out the reaction a plastoquinone + NADPH + (n+1) H(+)(in) = a plastoquinol + NADP(+) + n H(+)(out). NDH shuttles electrons from NAD(P)H:plastoquinone, via FMN and iron-sulfur (Fe-S) centers, to quinones in the photosynthetic chain and possibly in a chloroplast respiratory chain. The immediate electron acceptor for the enzyme in this species is believed to be plastoquinone. Couples the redox reaction to proton translocation, and thus conserves the redox energy in a proton gradient. The chain is NAD(P)H-quinone oxidoreductase subunit K, chloroplastic from Guizotia abyssinica (Niger).